Reading from the N-terminus, the 715-residue chain is DNA ligase (715 aa).

NAD(+) is bound by residues 47–51, 96–97, and E128; these read DADYD and SL. The N6-AMP-lysine intermediate role is filled by K130. Positions 151, 188, 306, and 330 each coordinate NAD(+). Positions 435, 438, 453, and 459 each coordinate Zn(2+). In terms of domain architecture, BRCT spans 637-715; it reads RRDTAVAGKT…EDEWLALIGN (79 aa).

This sequence belongs to the NAD-dependent DNA ligase family. LigA subfamily. It depends on Mg(2+) as a cofactor. The cofactor is Mn(2+).

It catalyses the reaction NAD(+) + (deoxyribonucleotide)n-3'-hydroxyl + 5'-phospho-(deoxyribonucleotide)m = (deoxyribonucleotide)n+m + AMP + beta-nicotinamide D-nucleotide.. In terms of biological role, DNA ligase that catalyzes the formation of phosphodiester linkages between 5'-phosphoryl and 3'-hydroxyl groups in double-stranded DNA using NAD as a coenzyme and as the energy source for the reaction. It is essential for DNA replication and repair of damaged DNA. This chain is DNA ligase, found in Rhodopseudomonas palustris (strain ATCC BAA-98 / CGA009).